Consider the following 790-residue polypeptide: Endonuclease MutS2 (790 aa).

334–341 (GPNTGGKT) lines the ATP pocket. Residues 713–788 (LDVRGMTLDD…GDGVTIVELH (76 aa)) form the Smr domain.

The protein belongs to the DNA mismatch repair MutS family. MutS2 subfamily. In terms of assembly, homodimer. Binds to stalled ribosomes, contacting rRNA.

Functionally, endonuclease that is involved in the suppression of homologous recombination and thus may have a key role in the control of bacterial genetic diversity. Its function is as follows. Acts as a ribosome collision sensor, splitting the ribosome into its 2 subunits. Detects stalled/collided 70S ribosomes which it binds and splits by an ATP-hydrolysis driven conformational change. Acts upstream of the ribosome quality control system (RQC), a ribosome-associated complex that mediates the extraction of incompletely synthesized nascent chains from stalled ribosomes and their subsequent degradation. Probably generates substrates for RQC. The polypeptide is Endonuclease MutS2 (Caldanaerobacter subterraneus subsp. tengcongensis (strain DSM 15242 / JCM 11007 / NBRC 100824 / MB4) (Thermoanaerobacter tengcongensis)).